A 150-amino-acid chain; its full sequence is Large ribosomal subunit protein uL15 (150 aa).

The protein belongs to the universal ribosomal protein uL15 family. Part of the 50S ribosomal subunit.

Its function is as follows. Binds to the 23S rRNA. The polypeptide is Large ribosomal subunit protein uL15 (Rickettsia typhi (strain ATCC VR-144 / Wilmington)).